The chain runs to 151 residues: Ribonuclease H (151 aa).

The region spanning 1-146 is the RNase H type-1 domain; it reads MPDLYAYTDG…ADELARAGMA (146 aa). Mg(2+) contacts are provided by aspartate 9, glutamate 52, aspartate 74, and aspartate 138.

This sequence belongs to the RNase H family. Monomer. It depends on Mg(2+) as a cofactor.

The protein localises to the cytoplasm. It carries out the reaction Endonucleolytic cleavage to 5'-phosphomonoester.. Its function is as follows. Endonuclease that specifically degrades the RNA of RNA-DNA hybrids. The polypeptide is Ribonuclease H (Cereibacter sphaeroides (strain ATCC 17029 / ATH 2.4.9) (Rhodobacter sphaeroides)).